We begin with the raw amino-acid sequence, 427 residues long: 3-phosphoshikimate 1-carboxyvinyltransferase (427 aa).

Positions 20, 21, and 25 each coordinate 3-phosphoshikimate. A phosphoenolpyruvate-binding site is contributed by K20. Positions 92 and 120 each coordinate phosphoenolpyruvate. Positions 166, 168, 312, and 339 each coordinate 3-phosphoshikimate. Q168 contributes to the phosphoenolpyruvate binding site. The Proton acceptor role is filled by D312. R343 and R385 together coordinate phosphoenolpyruvate.

The protein belongs to the EPSP synthase family. As to quaternary structure, monomer.

It is found in the cytoplasm. The catalysed reaction is 3-phosphoshikimate + phosphoenolpyruvate = 5-O-(1-carboxyvinyl)-3-phosphoshikimate + phosphate. It functions in the pathway metabolic intermediate biosynthesis; chorismate biosynthesis; chorismate from D-erythrose 4-phosphate and phosphoenolpyruvate: step 6/7. Its function is as follows. Catalyzes the transfer of the enolpyruvyl moiety of phosphoenolpyruvate (PEP) to the 5-hydroxyl of shikimate-3-phosphate (S3P) to produce enolpyruvyl shikimate-3-phosphate and inorganic phosphate. The chain is 3-phosphoshikimate 1-carboxyvinyltransferase from Streptococcus equi subsp. zooepidemicus (strain MGCS10565).